Consider the following 380-residue polypeptide: Pregnancy-associated glycoprotein 6 (380 aa).

A signal peptide spans 1–15; sequence MKWLVLLGLVSISEC. Positions 16–53 are cleaved as a propeptide — activation peptide; the sequence is IVKIPLRRVKTMRKTLSEKNMLNNFLKEHAYRLSQISF. Residues asparagine 57 and asparagine 74 are each glycosylated (N-linked (GlcNAc...) asparagine). One can recognise a Peptidase A1 domain in the interval 71-377; that stretch reads YLGNITIGTP…DRGHDRIGLA (307 aa). Residue aspartate 89 is part of the active site. Cysteine 102 and cysteine 107 are oxidised to a cystine. Asparagine 125 is a glycosylation site (N-linked (GlcNAc...) asparagine). A disulfide bridge links cysteine 261 with cysteine 265. The active site involves aspartate 270. The cysteines at positions 303 and 337 are disulfide-linked.

Belongs to the peptidase A1 family. As to expression, trophoblast and placental tissue. Produced specifically in the invasive binucleate cells of the placenta.

The protein localises to the secreted. It localises to the extracellular space. This chain is Pregnancy-associated glycoprotein 6, found in Ovis aries (Sheep).